A 287-amino-acid chain; its full sequence is MSFFNFKAFGRNSKKNKNQPLNVAQPPAMNTIYSSPHSSNSRLSLRNKHHSPKRHSQTSFPAQKSTPQSQQLTSTTPQSQQQEASERSESQQIMFLSEPFVRTALVKGSFKTIVQLPKYVDLGEWIALNVFEFFTNLNQFYGVVAEYVTPDAYPTMNAGPHTDYLWLDANNRQVSLPASQYIDLALTWINNKVNDKNLFPTKNGLPFPQQFSRDVQRIMVQMFRIFAHIYHHHFDKIVHLSLEAHWNSFFSHFISFAKEFKIIDRKEMAPLLPLIESFEKQGKIIYN.

The disordered stretch occupies residues 1–89; that stretch reads MSFFNFKAFG…QQQEASERSE (89 aa). Y33 is modified (phosphotyrosine). Residues 34 to 44 show a composition bias toward low complexity; it reads SSPHSSNSRLS. Over residues 45–56 the composition is skewed to basic residues; sequence LRNKHHSPKRHS. A Phosphoserine modification is found at S59. The segment covering 63–83 has biased composition (low complexity); that stretch reads QKSTPQSQQLTSTTPQSQQQE. Phosphothreonine is present on T76.

This sequence belongs to the MOB1/phocein family. Interacts with protein kinase CBK1 to form the RAM CBK1-MOB2 kinase complex.

Its subcellular location is the nucleus. The protein localises to the cytoplasm. In terms of biological role, functions as an activator subunit for the CBK1 protein kinase. Part of the regulation of ACE2 activity and cellular morphogenesis (RAM) signaling network. Required for coordinating polarized cell growth during interphase with the onset of mitosis. Required for mother/daughter cell separation after cytokinesis. Also has a role in the prevention of nuclear export of ACE2 from the daughter cell nucleus after mitotic exit. It coordinates ACE2-dependent transcription with mitotic exit network activation. The sequence is that of CBK1 kinase activator protein MOB2 (MOB2) from Saccharomyces cerevisiae (strain ATCC 204508 / S288c) (Baker's yeast).